A 188-amino-acid chain; its full sequence is Elongation factor P (188 aa).

This sequence belongs to the elongation factor P family.

The protein resides in the cytoplasm. It participates in protein biosynthesis; polypeptide chain elongation. Its function is as follows. Involved in peptide bond synthesis. Stimulates efficient translation and peptide-bond synthesis on native or reconstituted 70S ribosomes in vitro. Probably functions indirectly by altering the affinity of the ribosome for aminoacyl-tRNA, thus increasing their reactivity as acceptors for peptidyl transferase. The sequence is that of Elongation factor P from Sulfurovum sp. (strain NBC37-1).